The chain runs to 142 residues: Nucleoside diphosphate kinase (142 aa).

ATP-binding residues include Lys11, Phe59, Arg87, Thr93, Arg104, and Asn114. His117 serves as the catalytic Pros-phosphohistidine intermediate.

The protein belongs to the NDK family. In terms of assembly, homotetramer. It depends on Mg(2+) as a cofactor.

The protein resides in the cytoplasm. The catalysed reaction is a 2'-deoxyribonucleoside 5'-diphosphate + ATP = a 2'-deoxyribonucleoside 5'-triphosphate + ADP. It catalyses the reaction a ribonucleoside 5'-diphosphate + ATP = a ribonucleoside 5'-triphosphate + ADP. Functionally, major role in the synthesis of nucleoside triphosphates other than ATP. The ATP gamma phosphate is transferred to the NDP beta phosphate via a ping-pong mechanism, using a phosphorylated active-site intermediate. This chain is Nucleoside diphosphate kinase, found in Dechloromonas aromatica (strain RCB).